Reading from the N-terminus, the 167-residue chain is Interferon gamma (167 aa).

The first 23 residues, 1–23 (MSYTSYILAFQLCLILGSYGCYC), serve as a signal peptide directing secretion. Glutamine 24 bears the Pyrrolidone carboxylic acid mark. N-linked (GlcNAc...) asparagine glycans are attached at residues asparagine 41, asparagine 108, and asparagine 117.

Belongs to the type II (or gamma) interferon family. As to quaternary structure, homodimer. Interacts with IFNGR1 (via extracellular domain); this interaction promotes IFNGR1 dimerization. In terms of tissue distribution, released primarily from activated T lymphocytes.

The protein resides in the secreted. Type II interferon produced by immune cells such as T-cells and NK cells that plays crucial roles in antimicrobial, antiviral, and antitumor responses by activating effector immune cells and enhancing antigen presentation. Primarily signals through the JAK-STAT pathway after interaction with its receptor IFNGR1 to affect gene regulation. Upon IFNG binding, IFNGR1 intracellular domain opens out to allow association of downstream signaling components JAK2, JAK1 and STAT1, leading to STAT1 activation, nuclear translocation and transcription of IFNG-regulated genes. Many of the induced genes are transcription factors such as IRF1 that are able to further drive regulation of a next wave of transcription. Plays a role in class I antigen presentation pathway by inducing a replacement of catalytic proteasome subunits with immunoproteasome subunits. In turn, increases the quantity, quality, and repertoire of peptides for class I MHC loading. Increases the efficiency of peptide generation also by inducing the expression of activator PA28 that associates with the proteasome and alters its proteolytic cleavage preference. Up-regulates as well MHC II complexes on the cell surface by promoting expression of several key molecules such as cathepsins B/CTSB, H/CTSH, and L/CTSL. Participates in the regulation of hematopoietic stem cells during development and under homeostatic conditions by affecting their development, quiescence, and differentiation. In Oryctolagus cuniculus (Rabbit), this protein is Interferon gamma (IFNG).